The following is an 861-amino-acid chain: FO synthase (861 aa).

2 Radical SAM core domains span residues 69 to 319 and 528 to 763; these read ITYS…LQAP and VTYI…LLHP. Residues 70-401 form a cofG-like region; the sequence is TYSKSVFIPL…PRLLPHVRAL (332 aa). Positions 83, 87, 90, 542, 546, and 549 each coordinate [4Fe-4S] cluster. Positions 505 to 838 are cofH-like; it reads DGPALDALTR…KPRTTLYGEV (334 aa).

In the N-terminal section; belongs to the radical SAM superfamily. CofG family. It in the C-terminal section; belongs to the radical SAM superfamily. CofH family. [4Fe-4S] cluster serves as cofactor.

The catalysed reaction is 5-amino-6-(D-ribitylamino)uracil + L-tyrosine + S-adenosyl-L-methionine = 5-amino-5-(4-hydroxybenzyl)-6-(D-ribitylimino)-5,6-dihydrouracil + 2-iminoacetate + 5'-deoxyadenosine + L-methionine + H(+). It catalyses the reaction 5-amino-5-(4-hydroxybenzyl)-6-(D-ribitylimino)-5,6-dihydrouracil + S-adenosyl-L-methionine = 7,8-didemethyl-8-hydroxy-5-deazariboflavin + 5'-deoxyadenosine + L-methionine + NH4(+) + H(+). It participates in cofactor biosynthesis; coenzyme F0 biosynthesis. Its function is as follows. Catalyzes the radical-mediated synthesis of 7,8-didemethyl-8-hydroxy-5-deazariboflavin (FO) from 5-amino-6-(D-ribitylamino)uracil and L-tyrosine. The sequence is that of FO synthase (fbiC) from Streptomyces avermitilis (strain ATCC 31267 / DSM 46492 / JCM 5070 / NBRC 14893 / NCIMB 12804 / NRRL 8165 / MA-4680).